The chain runs to 793 residues: MASLSSTILSRSPAARRRITPASAKLHRPECFATSAWMGSSSKNLSLSYQLNHKKISVATVDAPQVHDHDGTTVHQGHDAVKNIEDPIEYIRTLLRTTGDGRISVSPYDTAWVAMIKDVEGRDGPQFPSSLEWIVQNQLEDGSWGDQKLFCVYDRLVNTIACVVALRSWNVHAHKVKRGVTYIKENVDKLMEGNEEHMTCGFEVVFPALLQKAKSLGIEDLPYDSPAVQEVYHVREQKLKRIPLEIMHKIPTSLLFSLEGLENLDWDKLLKLQSADGSFLTSPSSTAFAFMQTKDEKCYQFIKNTIDTFNGGAPHTYPVDVFGRLWAIDRLQRLGISRFFEPEIADCLSHIHKFWTDKGVFSGRESEFCDIDDTSMGMRLMRMHGYDVDPNVLRNFKQKDGKFSCYGGQMIESPSPIYNLYRASQLRFPGEEILEDAKRFAYDFLKEKLANNQILDKWVISKHLPDEIKLGLEMPWLATLPRVEAKYYIQYYAGSGDVWIGKTLYRMPEISNDTYHDLAKTDFKRCQAKHQFEWLYMQEWYESCGIEEFGISRKDLLLSYFLATASIFELERTNERIAWAKSQIIAKMITSFFNKETTSEEDKRALLNELGNINGLNDTNGAGREGGAGSIALATLTQFLEGFDRYTRHQLKNAWSVWLTQLQHGEADDAELLTNTLNICAGHIAFREEILAHNEYKALSNLTSKICRQLSFIQSEKEMGVEGEIAAKSSIKNKELEEDMQMLVKLVLEKYGGIDRNIKKAFLAVAKTYYYRAYHAADTIDTHMFKVLFEPVA.

Residues 1 to 59 (MASLSSTILSRSPAARRRITPASAKLHRPECFATSAWMGSSSKNLSLSYQLNHKKISVA) constitute a chloroplast transit peptide. Substrate is bound at residue Lys-238. Residues Asp-370 and Asp-372 each coordinate Mg(2+). The DXDD motif signature appears at 370-373 (DIDD). Lys-457 provides a ligand contact to substrate.

It belongs to the terpene synthase family. Mg(2+) serves as cofactor.

Its subcellular location is the plastid. It is found in the chloroplast. It catalyses the reaction (2E,6E,10E)-geranylgeranyl diphosphate = (+)-copalyl diphosphate. It participates in secondary metabolite biosynthesis; terpenoid biosynthesis. Functionally, involved in tanshinone biosynthesis in hairy roots. Catalyzes the conversion of geranylgeranyl diphosphate (GGPP) to copalyl diphosphate (CPP). This Salvia miltiorrhiza (Chinese sage) protein is Copalyl diphosphate synthase CPS1, chloroplastic.